A 112-amino-acid chain; its full sequence is Integration host factor subunit alpha (112 aa).

It belongs to the bacterial histone-like protein family. In terms of assembly, heterodimer of an alpha and a beta chain.

This protein is one of the two subunits of integration host factor, a specific DNA-binding protein that functions in genetic recombination as well as in transcriptional and translational control. This Rhizobium leguminosarum bv. trifolii (strain WSM2304) protein is Integration host factor subunit alpha.